Reading from the N-terminus, the 405-residue chain is L-rhamnonate dehydratase (405 aa).

Residues H33 and R59 each coordinate substrate. Residues D226, E252, and E280 each coordinate Mg(2+). The active-site Proton acceptor is H329. Residue E349 coordinates substrate.

This sequence belongs to the mandelate racemase/muconate lactonizing enzyme family. RhamD subfamily. Homooctamer; tetramer of dimers. Mg(2+) serves as cofactor.

It catalyses the reaction L-rhamnonate = 2-dehydro-3-deoxy-L-rhamnonate + H2O. Its function is as follows. Catalyzes the dehydration of L-rhamnonate to 2-keto-3-deoxy-L-rhamnonate (KDR). The protein is L-rhamnonate dehydratase of Escherichia coli (strain K12 / DH10B).